Consider the following 207-residue polypeptide: Large ribosomal subunit protein uL4 (207 aa).

Residues 53–85 (ERSDVARTGKKFGRQKGGGTARHGDRKAPIFIG) form a disordered region.

It belongs to the universal ribosomal protein uL4 family. Part of the 50S ribosomal subunit.

One of the primary rRNA binding proteins, this protein initially binds near the 5'-end of the 23S rRNA. It is important during the early stages of 50S assembly. It makes multiple contacts with different domains of the 23S rRNA in the assembled 50S subunit and ribosome. Its function is as follows. Forms part of the polypeptide exit tunnel. The sequence is that of Large ribosomal subunit protein uL4 from Novosphingobium aromaticivorans (strain ATCC 700278 / DSM 12444 / CCUG 56034 / CIP 105152 / NBRC 16084 / F199).